The following is a 113-amino-acid chain: Large ribosomal subunit protein uL22 (113 aa).

Belongs to the universal ribosomal protein uL22 family. Part of the 50S ribosomal subunit.

Functionally, this protein binds specifically to 23S rRNA; its binding is stimulated by other ribosomal proteins, e.g. L4, L17, and L20. It is important during the early stages of 50S assembly. It makes multiple contacts with different domains of the 23S rRNA in the assembled 50S subunit and ribosome. Its function is as follows. The globular domain of the protein is located near the polypeptide exit tunnel on the outside of the subunit, while an extended beta-hairpin is found that lines the wall of the exit tunnel in the center of the 70S ribosome. This chain is Large ribosomal subunit protein uL22, found in Xylella fastidiosa (strain M12).